The sequence spans 143 residues: MAIYGIGTDLAQVSRIAAVLERTGGRFAEKVLGPDELRVFHARRARSEARGIAFLATRFSAKEAFSKAIGLGMHWPMTWRALQTLNRPSGEPYVIASGELAAWLDARGITARVTVSDERDYAVTFVVAEAPDDVAAARSGAAS.

Residues aspartate 9 and glutamate 63 each coordinate Mg(2+).

The protein belongs to the P-Pant transferase superfamily. AcpS family. Mg(2+) serves as cofactor.

It is found in the cytoplasm. The enzyme catalyses apo-[ACP] + CoA = holo-[ACP] + adenosine 3',5'-bisphosphate + H(+). Functionally, transfers the 4'-phosphopantetheine moiety from coenzyme A to a Ser of acyl-carrier-protein. The polypeptide is Holo-[acyl-carrier-protein] synthase (Burkholderia pseudomallei (strain 668)).